The following is a 243-amino-acid chain: MASTLKFIVIVPAAGVGKRMQANCPKQYLRINNETILSHTVMRLLSHPLISQVIVALGTEDQYFAESELAHHKDIIRVNGGTERVNSVLNGLKAVDSDKYPWVLVHDAARPCVSHQDIDKLITRCLRKDYGGILATPVRDTMKRGVLIKDSAKGDNTIIESTVEREQLWHALTPQMYKTDELTLAIEQALENSLKITDEASAIEQANLPSLLVSASSENIKITHPNDLALAEFYLNKQANNTN.

Belongs to the IspD/TarI cytidylyltransferase family. IspD subfamily.

The catalysed reaction is 2-C-methyl-D-erythritol 4-phosphate + CTP + H(+) = 4-CDP-2-C-methyl-D-erythritol + diphosphate. It functions in the pathway isoprenoid biosynthesis; isopentenyl diphosphate biosynthesis via DXP pathway; isopentenyl diphosphate from 1-deoxy-D-xylulose 5-phosphate: step 2/6. Functionally, catalyzes the formation of 4-diphosphocytidyl-2-C-methyl-D-erythritol from CTP and 2-C-methyl-D-erythritol 4-phosphate (MEP). The protein is 2-C-methyl-D-erythritol 4-phosphate cytidylyltransferase of Colwellia psychrerythraea (strain 34H / ATCC BAA-681) (Vibrio psychroerythus).